Here is a 256-residue protein sequence, read N- to C-terminus: Imidazole glycerol phosphate synthase subunit HisF (256 aa).

Active-site residues include Asp12 and Asp131.

Belongs to the HisA/HisF family. Heterodimer of HisH and HisF.

The protein resides in the cytoplasm. The enzyme catalyses 5-[(5-phospho-1-deoxy-D-ribulos-1-ylimino)methylamino]-1-(5-phospho-beta-D-ribosyl)imidazole-4-carboxamide + L-glutamine = D-erythro-1-(imidazol-4-yl)glycerol 3-phosphate + 5-amino-1-(5-phospho-beta-D-ribosyl)imidazole-4-carboxamide + L-glutamate + H(+). It participates in amino-acid biosynthesis; L-histidine biosynthesis; L-histidine from 5-phospho-alpha-D-ribose 1-diphosphate: step 5/9. In terms of biological role, IGPS catalyzes the conversion of PRFAR and glutamine to IGP, AICAR and glutamate. The HisF subunit catalyzes the cyclization activity that produces IGP and AICAR from PRFAR using the ammonia provided by the HisH subunit. This Pseudomonas paraeruginosa (strain DSM 24068 / PA7) (Pseudomonas aeruginosa (strain PA7)) protein is Imidazole glycerol phosphate synthase subunit HisF.